We begin with the raw amino-acid sequence, 662 residues long: Cytochrome bo(3) ubiquinol oxidase subunit 1 (662 aa).

The Extracellular segment spans residues Met1–Glu14. The chain crosses the membrane as a helical span at residues Pro15 to Ile35. The Cytoplasmic portion of the chain corresponds to Thr36 to Ser58. A helical membrane pass occupies residues Ile59–Met79. The a ubiquinone site is built by Arg71, Asp75, and His98. Over Arg80–His106 the chain is Extracellular. His106 contributes to the heme b binding site. The chain crosses the membrane as a helical span at residues Gly107–Ile127. The Cytoplasmic portion of the chain corresponds to Pro128–Ser145. A helical membrane pass occupies residues Phe146–Ala166. At Gln167–Tyr189 the chain is on the extracellular side. A heme b-binding site is contributed by Trp170. A helical membrane pass occupies residues Trp190 to Val210. The Cytoplasmic portion of the chain corresponds to Thr211 to Ser232. Residues Leu233–Leu253 form a helical membrane-spanning segment. The Extracellular portion of the chain corresponds to Thr254–Asn277. A helical membrane pass occupies residues Leu278 to Phe298. His284 serves as a coordination point for Cu(2+). Residues His284 to Tyr288 constitute a cross-link (1'-histidyl-3'-tyrosine (His-Tyr)). Tyr288 contributes to the Fe(II)-heme o binding site. The Cytoplasmic portion of the chain corresponds to Ser299 to Arg309. The helical transmembrane segment at Leu310–Val330 threads the bilayer. The Extracellular segment spans residues Trp331–Thr346. The Cu(2+) site is built by His333 and His334. The chain crosses the membrane as a helical span at residues Phe347–Leu367. At Phe368–Ser380 the chain is on the cytoplasmic side. The chain crosses the membrane as a helical span at residues Ile381 to Leu401. Over Ser402–Ser413 the chain is Extracellular. Fe(II)-heme o-binding residues include His411 and His419. Residues Leu414–Ala434 traverse the membrane as a helical segment. His421 lines the heme b pocket. The Cytoplasmic segment spans residues Gly435–Ala456. The helical transmembrane segment at Phe457–Met477 threads the bilayer. At Gly478–Met493 the chain is on the extracellular side. 2 residues coordinate heme b: Arg481 and Arg482. A helical transmembrane segment spans residues Leu494 to Ile514. The Cytoplasmic portion of the chain corresponds to Gln515–His586. Residues Met587–Ser607 traverse the membrane as a helical segment. Position 608 (Ala608) is a topological domain, extracellular. Residues Val609–Ile629 traverse the membrane as a helical segment. Topologically, residues Asn630–Lys662 are cytoplasmic.

This sequence belongs to the heme-copper respiratory oxidase family. The cytochrome bo(3) ubiquinol oxidase complex is a heterooctamer of two A chains, two B chains, two C chains and two D chains. Cu(2+) is required as a cofactor. Requires heme b as cofactor. Fe(II)-heme o serves as cofactor.

It localises to the cell membrane. The catalysed reaction is 2 a ubiquinol + O2 + n H(+)(in) = 2 a ubiquinone + 2 H2O + n H(+)(out). Cytochrome bo(3) ubiquinol oxidase is the terminal enzyme in the aerobic respiratory chain. Catalyzes the four-electron reduction of O2 to water, using a ubiquinol as a membrane soluble electron donor for molecular oxygen reduction. Has proton pump activity across the membrane in addition to electron transfer, pumping 2 protons/electron and generating a proton motive force. All the redox centers of this enzyme complex are located within the largest subunit, subunit I. Protons are probably pumped via D- and K- channels found in this subunit. The chain is Cytochrome bo(3) ubiquinol oxidase subunit 1 (cyoB) from Buchnera aphidicola subsp. Acyrthosiphon pisum (strain APS) (Acyrthosiphon pisum symbiotic bacterium).